The primary structure comprises 1230 residues: Cullin-associated NEDD8-dissociated protein 1 (1230 aa).

Ala2 carries the N-acetylalanine modification. HEAT repeat units follow at residues 2–39 (ASAS…KDSI), 44–81 (DSER…KVKE), 83–119 (QVET…ELPP), 131–165 (CKKI…LSRQ), 171–208 (NFHP…SCGN), 210–247 (VFVD…QAGH), 248–282 (RIGE…FESF), 289–366 (EVYP…TRHE), 370–407 (EFYK…QTRP), 424–467 (PLTM…VLPG), 471–510 (QHIP…NHSP), and 515–552 (PHVQ…VIRP). Lys55 carries the post-translational modification N6-acetyllysine. A disordered region spans residues 315–344 (DEDEDENAMDADGGDDDDQGSDDEYSDDDD). At Ser335 the chain carries Phosphoserine. Phosphoserine is present on Ser558. HEAT repeat units lie at residues 563-602 (PYIK…NLGD), 606-643 (PDLS…LKID), 646-683 (PVLG…NYSD), 688-725 (AMID…VYPS), 729-768 (KISG…TGTN), 770-808 (LGYM…ALTR), 809-845 (ACPK…LGEV), 852-889 (SGQL…GNLP), 890-927 (EYLP…GLKP), 928-960 (YVEN…KLTL), 961-998 (IDPE…DHPQ), 1002-1039 (PLLK…NKPS), 1043-1097 (DLLD…DSCL), 1099-1133 (RLDI…LSTL), and 1140-1189 (QRLD…IPEA). Lys971 bears the N6-acetyllysine mark.

Belongs to the CAND family. In terms of assembly, interacts with TBP. Part of a complex that contains CUL1 and RBX1. Interacts with unneddylated cullins: interacts with CUL1, CUL2, CUL3, CUL4A, CUL4B and CUL5. Does not bind neddylated CUL1. Interaction with cullins is abolished in presence of COMMD1, which antagonizes with CAND1 for interacting with cullins. Interacts with ERCC6. Interacts with DCUN1D1, DCUN1D2, DCUN1D3, DCUN1D4 and DCUN1D5; these interactions are bridged by cullins and strongly inhibits the neddylation of cullins. In terms of tissue distribution, detected in heart, brain, spleen, liver, skeletal muscle, kidney and testis.

Its subcellular location is the cytoplasm. It is found in the nucleus. Its function is as follows. Key assembly factor of SCF (SKP1-CUL1-F-box protein) E3 ubiquitin ligase complexes that promotes the exchange of the substrate-recognition F-box subunit in SCF complexes, thereby playing a key role in the cellular repertoire of SCF complexes. Acts as a F-box protein exchange factor. The exchange activity of CAND1 is coupled with cycles of neddylation conjugation: in the deneddylated state, cullin-binding CAND1 binds CUL1-RBX1, increasing dissociation of the SCF complex and promoting exchange of the F-box protein. Probably plays a similar role in other cullin-RING E3 ubiquitin ligase complexes. May indirectly enhance transcription from various types of promoters. This is Cullin-associated NEDD8-dissociated protein 1 (Cand1) from Rattus norvegicus (Rat).